Reading from the N-terminus, the 502-residue chain is Probable cytochrome P450 28d1 (502 aa).

Cys446 provides a ligand contact to heme.

Belongs to the cytochrome P450 family. The cofactor is heme.

It localises to the endoplasmic reticulum membrane. The protein localises to the microsome membrane. In terms of biological role, may be involved in the metabolism of insect hormones and in the breakdown of synthetic insecticides. This Drosophila melanogaster (Fruit fly) protein is Probable cytochrome P450 28d1 (Cyp28d1).